The sequence spans 126 residues: Spermidine export protein MdtJ (126 aa).

A run of 4 helical transmembrane segments spans residues 1-21 (MIYW…TLSM), 30-50 (ITGH…LSLA), 54-74 (VALG…ITLF), and 81-101 (EPFS…IVML).

It belongs to the drug/metabolite transporter (DMT) superfamily. Small multidrug resistance (SMR) (TC 2.A.7.1) family. MdtJ subfamily. In terms of assembly, forms a complex with MdtI.

It is found in the cell inner membrane. In terms of biological role, catalyzes the excretion of spermidine. The protein is Spermidine export protein MdtJ of Sodalis glossinidius (strain morsitans).